Consider the following 730-residue polypeptide: Multifunctional procollagen lysine hydroxylase and glycosyltransferase (730 aa).

The signal sequence occupies residues Met-1–Ala-16. The segment at Thr-20–Glu-280 is required for glycosyltransferase activity. UDP contacts are provided by residues Val-30–Thr-32 and Asp-98–Tyr-100. Positions 98, 101, and 242 each coordinate Mn(2+). Gly-245–Lys-248 provides a ligand contact to UDP. Residues Cys-268 and Cys-271 are joined by a disulfide bond. An accessory region region spans residues Val-281–Glu-507. Cys-554 and Cys-690 are joined by a disulfide. 2-oxoglutarate-binding residues include Arg-590 and Tyr-648. The Fe2OG dioxygenase domain occupies Glu-639–Pro-730. Fe cation-binding residues include His-659 and Asp-661. The segment at Thr-664 to Leu-707 is important for dimerization. A glycan (N-linked (GlcNAc...) asparagine) is linked at Asn-689. Position 711 (His-711) interacts with Fe cation. Arg-721 is a 2-oxoglutarate binding site.

Homodimer. Fe(2+) is required as a cofactor. It depends on L-ascorbate as a cofactor. Requires Mn(2+) as cofactor.

It is found in the rough endoplasmic reticulum. The protein resides in the endoplasmic reticulum lumen. Its subcellular location is the endoplasmic reticulum membrane. The protein localises to the secreted. It localises to the extracellular space. It catalyses the reaction L-lysyl-[collagen] + 2-oxoglutarate + O2 = (5R)-5-hydroxy-L-lysyl-[collagen] + succinate + CO2. The enzyme catalyses (5R)-5-hydroxy-L-lysyl-[collagen] + UDP-alpha-D-galactose = (5R)-5-O-(beta-D-galactosyl)-5-hydroxy-L-lysyl-[collagen] + UDP + H(+). The catalysed reaction is (5R)-5-O-(beta-D-galactosyl)-5-hydroxy-L-lysyl-[collagen] + UDP-alpha-D-glucose = (5R)-5-O-[alpha-D-glucosyl-(1-&gt;2)-beta-D-galactosyl]-5-hydroxy-L-lysyl-[collagen] + UDP + H(+). Its function is as follows. Multifunctional enzyme that catalyzes a series of post-translational modifications on Lys residues in procollagen. Catalyzes the formation of hydroxylysine residues in -Xaa-Lys-Gly- sequences in type IV collagens. Transfers galactose onto hydroxylysine groups, giving rise to galactosyl 5-hydroxylysine. Catalyzes the subsequent transfer of glucose moieties, giving rise to 1,2-glucosylgalactosyl-5-hydroxylysine residues. Essential for normal biosynthesis and secretion of type IV collagens. Essential for normal stability of the basement membrane. The polypeptide is Multifunctional procollagen lysine hydroxylase and glycosyltransferase (let-268) (Caenorhabditis elegans).